The sequence spans 32 residues: Growth hormone-related protein 4 (32 aa).

The cysteines at positions 4 and 11 are disulfide-linked.

The protein belongs to the somatotropin/prolactin family. In terms of processing, glycosylated. As to expression, placental basal zone cells.

Its subcellular location is the secreted. The protein is Growth hormone-related protein 4 of Rattus norvegicus (Rat).